Here is a 514-residue protein sequence, read N- to C-terminus: Type-2 serine--tRNA ligase (514 aa).

Alanine 313 contributes to the L-serine binding site. Cysteine 315 provides a ligand contact to Zn(2+). Arginine 344 is a binding site for L-serine. ATP is bound by residues 344–346 (RWE) and 355–356 (RV). 361–363 (RGE) lines the L-serine pocket. Zn(2+) contacts are provided by glutamate 363 and cysteine 470. Arginine 477 serves as a coordination point for ATP.

Belongs to the class-II aminoacyl-tRNA synthetase family. Type-2 seryl-tRNA synthetase subfamily. In terms of assembly, homodimer. Zn(2+) serves as cofactor.

The protein resides in the cytoplasm. It catalyses the reaction tRNA(Ser) + L-serine + ATP = L-seryl-tRNA(Ser) + AMP + diphosphate + H(+). The catalysed reaction is tRNA(Sec) + L-serine + ATP = L-seryl-tRNA(Sec) + AMP + diphosphate + H(+). It functions in the pathway aminoacyl-tRNA biosynthesis; selenocysteinyl-tRNA(Sec) biosynthesis; L-seryl-tRNA(Sec) from L-serine and tRNA(Sec): step 1/1. Its function is as follows. Catalyzes the attachment of serine to tRNA(Ser). Is also able to aminoacylate tRNA(Sec) with serine, to form the misacylated tRNA L-seryl-tRNA(Sec), which will be further converted into selenocysteinyl-tRNA(Sec). The chain is Type-2 serine--tRNA ligase from Methanococcus maripaludis (strain C5 / ATCC BAA-1333).